We begin with the raw amino-acid sequence, 107 residues long: Iron-binding protein IscA (107 aa).

Fe cation is bound by residues Cys-35, Cys-99, and Cys-101.

The protein belongs to the HesB/IscA family. In terms of assembly, homodimer; may form tetramers and higher multimers. The cofactor is Fe cation.

Is able to transfer iron-sulfur clusters to apo-ferredoxin. Multiple cycles of [2Fe2S] cluster formation and transfer are observed, suggesting that IscA acts catalytically. Recruits intracellular free iron so as to provide iron for the assembly of transient iron-sulfur cluster in IscU in the presence of IscS, L-cysteine and the thioredoxin reductase system TrxA/TrxB. In Xenorhabdus nematophila (strain ATCC 19061 / DSM 3370 / CCUG 14189 / LMG 1036 / NCIMB 9965 / AN6), this protein is Iron-binding protein IscA.